The following is a 184-amino-acid chain: GTP cyclohydrolase 1 (184 aa).

Positions 75, 78, and 146 each coordinate Zn(2+).

Belongs to the GTP cyclohydrolase I family. As to quaternary structure, homomer.

The enzyme catalyses GTP + H2O = 7,8-dihydroneopterin 3'-triphosphate + formate + H(+). The protein operates within cofactor biosynthesis; 7,8-dihydroneopterin triphosphate biosynthesis; 7,8-dihydroneopterin triphosphate from GTP: step 1/1. The polypeptide is GTP cyclohydrolase 1 (Coxiella burnetii (strain Dugway 5J108-111)).